We begin with the raw amino-acid sequence, 206 residues long: Large ribosomal subunit protein uL4 (206 aa).

The protein belongs to the universal ribosomal protein uL4 family. As to quaternary structure, part of the 50S ribosomal subunit.

Functionally, one of the primary rRNA binding proteins, this protein initially binds near the 5'-end of the 23S rRNA. It is important during the early stages of 50S assembly. It makes multiple contacts with different domains of the 23S rRNA in the assembled 50S subunit and ribosome. Forms part of the polypeptide exit tunnel. The protein is Large ribosomal subunit protein uL4 of Rhodopseudomonas palustris (strain BisB5).